Reading from the N-terminus, the 146-residue chain is Leghemoglobin (146 aa).

The region spanning 3 to 146 (AFTEKQEALV…FAAGIKKAYA (144 aa)) is the Globin domain. A nitrated tyrosine mark is found at Tyr-26 and Tyr-31. Heme b is bound at residue Ser-46. Residue Ser-46 is modified to Phosphoserine. An O2-binding site is contributed by His-62. Heme b contacts are provided by His-93 and Lys-96. Tyr-134 carries the post-translational modification Nitrated tyrosine.

Belongs to the plant globin family. As to quaternary structure, monomer. Nitrated mainly at Tyr-31 and, to a lower extent, at Tyr-26 and Tyr-134, in effective nodules and particularly in hypoxic conditions; this mechanism may play a protective role in the symbiosis by buffering toxic peroxynitrite NO(2)(-). Nitration level decrease during nodule senescence. Post-translationally, phosphorylation at Ser-46 disrupts the molecular environment of its porphyrin ring oxygen binding pocket, thus leading to a reduced oxygen consumption and to the delivery of oxygen O(2) to symbiosomes. Root nodules.

It localises to the cytoplasm. The protein localises to the cytosol. Its subcellular location is the nucleus. Its function is as follows. Leghemoglobin that reversibly binds oxygen O(2) through a pentacoordinated heme iron. In root nodules, facilitates the diffusion of oxygen to the bacteroids while preventing the bacterial nitrogenase from being inactivated by buffering dioxygen, nitric oxide and carbon monoxide, and promoting the formation of reactive oxygen species (ROS, e.g. H(2)O(2)). This role is essential for symbiotic nitrogen fixation (SNF). In Phaseolus vulgaris (Kidney bean), this protein is Leghemoglobin.